The sequence spans 636 residues: 1-deoxy-D-xylulose-5-phosphate synthase (636 aa).

Thiamine diphosphate is bound by residues His-72 and 113-115; that span reads GHA. Position 144 (Asp-144) interacts with Mg(2+). Residues 145 to 146, Asn-174, Tyr-287, and Glu-370 each bind thiamine diphosphate; that span reads GS. A Mg(2+)-binding site is contributed by Asn-174.

This sequence belongs to the transketolase family. DXPS subfamily. Homodimer. Requires Mg(2+) as cofactor. The cofactor is thiamine diphosphate.

The enzyme catalyses D-glyceraldehyde 3-phosphate + pyruvate + H(+) = 1-deoxy-D-xylulose 5-phosphate + CO2. Its pathway is metabolic intermediate biosynthesis; 1-deoxy-D-xylulose 5-phosphate biosynthesis; 1-deoxy-D-xylulose 5-phosphate from D-glyceraldehyde 3-phosphate and pyruvate: step 1/1. Its function is as follows. Catalyzes the acyloin condensation reaction between C atoms 2 and 3 of pyruvate and glyceraldehyde 3-phosphate to yield 1-deoxy-D-xylulose-5-phosphate (DXP). In Synechococcus sp. (strain ATCC 27144 / PCC 6301 / SAUG 1402/1) (Anacystis nidulans), this protein is 1-deoxy-D-xylulose-5-phosphate synthase.